The primary structure comprises 413 residues: Multifunctional CCA protein (413 aa).

Positions 8 and 11 each coordinate ATP. Residues Gly8 and Arg11 each contribute to the CTP site. Residues Asp21 and Asp23 each coordinate Mg(2+). Arg91, Arg143, and Arg146 together coordinate ATP. CTP-binding residues include Arg91, Arg143, and Arg146. The HD domain occupies 232–333; that stretch reads TGVHVMMVVD…VRFFERSDAL (102 aa).

The protein belongs to the tRNA nucleotidyltransferase/poly(A) polymerase family. Bacterial CCA-adding enzyme type 1 subfamily. In terms of assembly, monomer. Can also form homodimers and oligomers. Requires Mg(2+) as cofactor. It depends on Ni(2+) as a cofactor.

The enzyme catalyses a tRNA precursor + 2 CTP + ATP = a tRNA with a 3' CCA end + 3 diphosphate. It catalyses the reaction a tRNA with a 3' CCA end + 2 CTP + ATP = a tRNA with a 3' CCACCA end + 3 diphosphate. Functionally, catalyzes the addition and repair of the essential 3'-terminal CCA sequence in tRNAs without using a nucleic acid template. Adds these three nucleotides in the order of C, C, and A to the tRNA nucleotide-73, using CTP and ATP as substrates and producing inorganic pyrophosphate. tRNA 3'-terminal CCA addition is required both for tRNA processing and repair. Also involved in tRNA surveillance by mediating tandem CCA addition to generate a CCACCA at the 3' terminus of unstable tRNAs. While stable tRNAs receive only 3'-terminal CCA, unstable tRNAs are marked with CCACCA and rapidly degraded. The protein is Multifunctional CCA protein of Burkholderia ambifaria (strain ATCC BAA-244 / DSM 16087 / CCUG 44356 / LMG 19182 / AMMD) (Burkholderia cepacia (strain AMMD)).